The primary structure comprises 276 residues: Outer plastidial membrane protein porin (276 aa).

Belongs to the eukaryotic mitochondrial porin (TC 1.B.8.1) family.

The protein resides in the plastid outer membrane. In terms of biological role, forms a channel through the cell membrane that allows diffusion of small hydrophilic molecules. The channel adopts an open conformation at low or zero membrane potential and a closed conformation at potentials above 30-40 mV. The open state has a weak anion selectivity whereas the closed state is cation-selective. The chain is Outer plastidial membrane protein porin (POR1) from Pisum sativum (Garden pea).